The chain runs to 185 residues: Protein DP71L (185 aa).

Residues 1-15 are compositionally biased toward basic residues; it reads MSRRNKKRSRRRRKK. Positions 1–38 are disordered; the sequence is MSRRNKKRSRRRRKKPLNDIQPGPSKSSAQDEPIKSVS. Important for host CHOP inhibition stretches follow at residues 126–128 and 170–174; these read VHF and LSTVF.

This sequence belongs to the asfivirus DP71L family. Interacts (via C-terminus) with host PPP1CB.

In terms of biological role, interacts with the host phosphatase PP1 catalytic subunit (PPP1CB) and recruits it to dephosphorylate EIF2S1/eIF2alpha and therefore restores the host translation that has been shut-down by the host. Also inhibits the EIF2S1/eIF2alpha-ATF4-DDIT3/CHOP pathway. The sequence is that of Protein DP71L from African swine fever virus (isolate Pig/Kenya/KEN-50/1950) (ASFV).